A 202-amino-acid polypeptide reads, in one-letter code: Large ribosomal subunit protein uL4 (202 aa).

The segment at lysine 47–arginine 67 is disordered.

The protein belongs to the universal ribosomal protein uL4 family. In terms of assembly, part of the 50S ribosomal subunit.

In terms of biological role, one of the primary rRNA binding proteins, this protein initially binds near the 5'-end of the 23S rRNA. It is important during the early stages of 50S assembly. It makes multiple contacts with different domains of the 23S rRNA in the assembled 50S subunit and ribosome. Forms part of the polypeptide exit tunnel. The polypeptide is Large ribosomal subunit protein uL4 (Dichelobacter nodosus (strain VCS1703A)).